The chain runs to 1584 residues: Kinesin-like protein unc-104 (1584 aa).

Residues 3 to 347 (SVKVAVRVRP…LRYADRAKQI (345 aa)) enclose the Kinesin motor domain. 93 to 100 (GQTGSGKS) contacts ATP. A microtubule-binding region spans residues 183–335 (VCSYHDICNL…PADINFDETL (153 aa)). Coiled coils occupy residues 425-445 (EQKL…LRDM), 598-652 (IDLK…SYIS), and 777-797 (SIEK…TDAE). The tract at residues 1366–1416 (IPMNKDPPTGNKAQELSDESGSNSITSPVSDKSLIKSSRSSDLLCRQKSKS) is disordered. Residues 1376-1394 (NKAQELSDESGSNSITSPV) show a composition bias toward polar residues. A compositionally biased stretch (low complexity) spans 1395–1409 (SDKSLIKSSRSSDLL). A PH domain is found at 1460–1558 (VVSKKGYMNF…WLYAINPLMA (99 aa)).

It belongs to the TRAFAC class myosin-kinesin ATPase superfamily. Kinesin family. Unc-104 subfamily. In terms of assembly, interacts with casy-1. In terms of tissue distribution, expressed in nerve ring, amphid commissure and ventral nerve cord (at protein level).

Its subcellular location is the cytoplasm. It is found in the cytoskeleton. It localises to the cell projection. The protein resides in the axon. Its function is as follows. Motor protein involved in microtubule-associated anterograde transport. Regulates the transport of synaptic vesicle precursors in the axon of DA motor neurons. Regulates the polarized sorting of axonal proteins. Essential for the transport of synaptic components during the synaptic remodeling of the DD motor neuron, probably downstream of cdk-5 and/or pct-1/cyy-1 complex. Required for the anterograde transport of neuropeptide-containing dense core vesicles along axons. Involved in necrotic cell death. The protein is Kinesin-like protein unc-104 (unc-104) of Caenorhabditis elegans.